The sequence spans 73 residues: MNVGDRVRVKESVVVYHHPDHRNQAFDLKDAEGEIAAILTEWNGKPISANFPYLVSFSNKFRAHLRDFELEVI.

Residues 43-46 (NGKP) are interaction with ferredoxin.

The protein belongs to the ferredoxin thioredoxin reductase alpha subunit family. In terms of assembly, heterodimer of subunit A (variable subunit) and subunit B (catalytic subunit). Heterodimeric FTR forms a complex with ferredoxin and thioredoxin.

In terms of biological role, variable subunit of the ferredoxin-thioredoxin reductase (FTR), which catalyzes the two-electron reduction of thioredoxins by the electrons provided by reduced ferredoxin. The protein is Ferredoxin-thioredoxin reductase, variable chain (ftrV) of Synechococcus sp. (strain ATCC 27144 / PCC 6301 / SAUG 1402/1) (Anacystis nidulans).